The sequence spans 299 residues: Acetylglutamate kinase (299 aa).

Substrate-binding positions include 62–63 (GG), R84, and N188.

This sequence belongs to the acetylglutamate kinase family. ArgB subfamily.

The protein resides in the cytoplasm. It catalyses the reaction N-acetyl-L-glutamate + ATP = N-acetyl-L-glutamyl 5-phosphate + ADP. It functions in the pathway amino-acid biosynthesis; L-arginine biosynthesis; N(2)-acetyl-L-ornithine from L-glutamate: step 2/4. Catalyzes the ATP-dependent phosphorylation of N-acetyl-L-glutamate. This Methanosarcina acetivorans (strain ATCC 35395 / DSM 2834 / JCM 12185 / C2A) protein is Acetylglutamate kinase.